We begin with the raw amino-acid sequence, 438 residues long: Polycomb protein eed-A (438 aa).

A disordered region spans residues 1 to 67 (MSEASGRAAG…NAPGRKAWGK (67 aa)). Over residues 40–57 (SIESGTNTERPDTPTNAA) the composition is skewed to polar residues. WD repeat units follow at residues 88–131 (DHNQ…DIRL), 139–182 (DADE…CIKH), 185–225 (GHGN…LVAI), 231–270 (GHRD…MKTA), 301–338 (IHRN…DDID), 356–396 (SQCD…PHKA), and 405–438 (KCAS…DRLR).

The protein belongs to the WD repeat ESC family. As to quaternary structure, component of the prc2/eed-ezh2 complex. Interacts with yy1. Can interact with ezh2, hdac1 and taf9.

It localises to the nucleus. In terms of biological role, polycomb group (PcG) protein. Component of the prc2/eed-ezh2 complex, which methylates 'Lys-9' and 'Lys-27' of histone H3, leading to transcriptional repression of the affected target gene. This chain is Polycomb protein eed-A (eed-a), found in Xenopus laevis (African clawed frog).